We begin with the raw amino-acid sequence, 209 residues long: MIGLIGRKVGMTRVFTEEGVSIPVTVVEVEANRIAQVKTLETDGYAAIQVTAGTKKANRVNKAEAGHFAKAGVEAGRGLWEFRLENGEEFAVGSELTVELFNEVKKVDVTGTSKGKGFQGTVKRWNFRTQDMTHGNSLSHRAPGSIGQCQTPGRVFKGKKMAGHMGAERVTTQNLEIVRVDAERNLLLIKGAVPGATGGNVIVKPAVKA.

Position 150 is an N5-methylglutamine (Gln-150).

The protein belongs to the universal ribosomal protein uL3 family. Part of the 50S ribosomal subunit. Forms a cluster with proteins L14 and L19. In terms of processing, methylated by PrmB.

In terms of biological role, one of the primary rRNA binding proteins, it binds directly near the 3'-end of the 23S rRNA, where it nucleates assembly of the 50S subunit. This Vibrio vulnificus (strain YJ016) protein is Large ribosomal subunit protein uL3.